Reading from the N-terminus, the 270-residue chain is UPF0354 protein BCAH820_4810 (270 aa).

It belongs to the UPF0354 family.

This is UPF0354 protein BCAH820_4810 from Bacillus cereus (strain AH820).